We begin with the raw amino-acid sequence, 184 residues long: ADP-ribosylation factor-like protein 2 (184 aa).

The N-myristoyl glycine moiety is linked to residue glycine 2. GTP-binding positions include 23–30 (GLDNAGKT), 66–70 (DVGGQ), and 125–128 (NKQD).

This sequence belongs to the small GTPase superfamily. Arf family. As to expression, ubiquitously expressed.

Functionally, GTP-binding protein involved in protein trafficking; may modulate vesicle budding and uncoating within the Golgi apparatus. The sequence is that of ADP-ribosylation factor-like protein 2 (Arl2) from Drosophila melanogaster (Fruit fly).